A 342-amino-acid chain; its full sequence is DDB1- and CUL4-associated factor 7 (342 aa).

WD repeat units follow at residues 6–52 (KRKE…LVGL), 60–100 (ICRN…VWRV), 108–150 (ECLL…IWGL), 165–206 (HVKT…MFDL), 213–252 (TIIY…ILDV), 257–296 (TPVA…IWDI), and 303–342 (IEDP…ILRV).

It belongs to the WD repeat DCAF7 family. Interacts with DYRK1A, DYRK1B and DIAPH1. Interacts with DDB1. Interacts with ZNF703. Interacts with human adenovirus 5 E1A protein.

Its subcellular location is the cytoplasm. It is found in the nucleus. It participates in protein modification; protein ubiquitination. Functionally, involved in craniofacial development. Acts upstream of the EDN1 pathway and is required for formation of the upper jaw equivalent, the palatoquadrate. The activity required for EDN1 pathway function differs between the first and second arches. Associates with DIAPH1 and controls GLI1 transcriptional activity. Could be involved in normal and disease skin development. May function as a substrate receptor for CUL4-DDB1 E3 ubiquitin-protein ligase complex. The polypeptide is DDB1- and CUL4-associated factor 7 (DCAF7) (Homo sapiens (Human)).